A 248-amino-acid chain; its full sequence is Aspartate/glutamate leucyltransferase (248 aa).

Belongs to the R-transferase family. Bpt subfamily.

The protein resides in the cytoplasm. It catalyses the reaction N-terminal L-glutamyl-[protein] + L-leucyl-tRNA(Leu) = N-terminal L-leucyl-L-glutamyl-[protein] + tRNA(Leu) + H(+). It carries out the reaction N-terminal L-aspartyl-[protein] + L-leucyl-tRNA(Leu) = N-terminal L-leucyl-L-aspartyl-[protein] + tRNA(Leu) + H(+). Functionally, functions in the N-end rule pathway of protein degradation where it conjugates Leu from its aminoacyl-tRNA to the N-termini of proteins containing an N-terminal aspartate or glutamate. The sequence is that of Aspartate/glutamate leucyltransferase from Polynucleobacter asymbioticus (strain DSM 18221 / CIP 109841 / QLW-P1DMWA-1) (Polynucleobacter necessarius subsp. asymbioticus).